The sequence spans 3133 residues: Hemocytin (3133 aa).

The region spanning 40 to 96 is the TIL 1 domain; it reads CTGGQQYTVCADSCLRKCSDTALAASGQCKPVCVEGCACSPSQLLDDNGVCVPVAKC. An N-linked (GlcNAc...) asparagine glycan is attached at asparagine 151. Positions 153 to 209 constitute a TIL 2 domain; that stretch reads TAQNMEFTTCETSEPLTCKNMHLPPSTQTAECRPGCQCKKGQVLDTASKRCVPATQC. Asparagine 237 carries an N-linked (GlcNAc...) asparagine glycan. The VWFD 1 domain occupies 247–418; that stretch reads GVCGAWGDSH…DSWKLKPTCP (172 aa). 3 disulfides stabilise this stretch: cysteine 249-cysteine 380, cysteine 271-cysteine 417, and cysteine 295-cysteine 302. Positions 509–576 constitute a TIL 3 domain; it reads CDEVCSNYDS…TTECVPRAKC (68 aa). N-linked (GlcNAc...) asparagine glycosylation occurs at asparagine 564. A disordered region spans residues 661 to 680; the sequence is PDGQSVESEPLPKPNELQIG. Positions 770–837 constitute a TIL 4 domain; the sequence is CPPGEVYQAC…ERTCVPVKDC (68 aa). Residues 899 to 924 form a disordered region; sequence STTTTTTTSTTTTTTTPEPTETTTET. Disulfide bonds link cysteine 940–cysteine 1095 and cysteine 1116–cysteine 1254. F5/8 type C domains follow at residues 940–1095 and 1116–1254; these read CSPD…IIGC and CTEP…PIGC. Residues asparagine 1170, asparagine 1387, asparagine 1622, asparagine 1727, and asparagine 1847 are each glycosylated (N-linked (GlcNAc...) asparagine). A VWFD 2 domain is found at 1619-1794; that stretch reads VFCNMTGRTF…KPGVPADACA (176 aa). 2 disulfides stabilise this stretch: cysteine 1621/cysteine 1754 and cysteine 1641/cysteine 1793. One can recognise a TIL 5 domain in the interval 1890–1948; it reads CPPPLVHYDCYRKRCEETCAPYPNAARACPAQEGQCSPGCYCPDGKLRKGDQCVLPADC. The 186-residue stretch at 1951–2136 folds into the VWFD 3 domain; the sequence is CTCTGVGTPA…WQASPEKLTE (186 aa). 2 disulfide bridges follow: cysteine 1953–cysteine 2099 and cysteine 2001–cysteine 2009. N-linked (GlcNAc...) asparagine glycans are attached at residues asparagine 1975 and asparagine 1985. 5 N-linked (GlcNAc...) asparagine glycosylation sites follow: asparagine 2093, asparagine 2113, asparagine 2161, asparagine 2276, and asparagine 2451. Positions 2229 to 2285 constitute a TIL 6 domain; it reads CEEPFVYRACVDCERTCDNYEQLQTSPEKCTNKPVEGCFCPEGKVRVNNTCIEPGKC. The VWFC 1 domain occupies 2553 to 2622; the sequence is VACRHQDNVY…DSGQCCGKCE (70 aa). N-linked (GlcNAc...) asparagine glycans are attached at residues asparagine 2647, asparagine 2654, asparagine 2663, asparagine 2794, asparagine 2810, asparagine 2865, asparagine 2929, asparagine 2964, and asparagine 3028. In terms of domain architecture, VWFC 2 spans 2842–2907; the sequence is VACRDGDKIY…AADHCCGRCV (66 aa). 4 disulfides stabilise this stretch: cysteine 2971–cysteine 3040, cysteine 2991–cysteine 3054, cysteine 3004–cysteine 3070, and cysteine 3020–cysteine 3072. Residues 2971-3076 form the CTCK domain; sequence CNEKPQALSK…PARCHCAACG (106 aa).

In terms of processing, may be converted into the 260 kDa mature hemocytin by proteolysis.

Functionally, adhesive protein and relates to hemostasis or encapsulation of foreign substances for self-defense. This chain is Hemocytin, found in Bombyx mori (Silk moth).